Reading from the N-terminus, the 720-residue chain is Cyclopenase penL (720 aa).

His-137, His-141, and His-313 together coordinate Cu cation.

It belongs to the tyrosinase family. Cu(2+) is required as a cofactor.

It carries out the reaction (-)-cyclopenine = viridicatin + methyl isocyanate + H(+). It catalyses the reaction (-)-4'-methoxycyclopenine = 4'-methoxyviridicatin + methyl isocyanate + H(+). It participates in secondary metabolite biosynthesis. The protein operates within alkaloid biosynthesis. Its pathway is mycotoxin biosynthesis. Its function is as follows. Cyclopenase; part of the gene cluster that mediates the biosynthesis of penigequinolones, potent insecticidal alkaloids that contain a highly modified 10-carbon prenyl group. The first stage is catalyzed by the nonribosomal peptide synthetase penN that condenses anthranilic acid and O-methyl-L-tyrosine to produce 4'-methoxycyclopeptin. 4'-methoxycyclopeptin is then converted to 4'-methoxydehydrocyclopeptin by the ketoglutarate-dependent dioxygenase penM through dehydrogenation to form a double bond between C-alpha and C-beta of the O-methyltyrosine side chain. PenM also converts its first product methoxydehydrocyclopeptin to 4'-methoxycyclopenin. The following conversion of 4'methoxycyclopenin into 4'-methoxyviridicatin is catalyzed by the cyclopenase penL. 4'-methoxyviridicatin is the precursor of quinolone natural products, and is further converted to quinolinone B. The prenyltransferase penI then catalyzes the canonical Friedel-Crafts alkylation of quinolinone B with dimethylallyl cation to yield dimethylallyl quinolone, which is subjected to FAD-dependent dehydrogenation by the FAD-linked oxidoreductase penH to yield conjugated aryl diene. The delta(3') double bond then serves as the site of the second alkylation with DMAPP catalyzed by the prenyltransferase penG to yield a carbenium ion intermediate, which can be attacked by H(2)O to yield a styrenyl quinolone containing a C3'-hydroxyprenyl chain, or undergo cyclization to yield yaequinolones J1 and J2. The conversion of the styrenyl quinolone into the tetrahydrofuran-containing yaequinolone C is performed by the FAD-dependent monooxygenase penE and involves epoxidation of the terminal C7'-C8' olefin, followed by epoxide ring opening initiated by the C3' hydroxyl group. The predicted cysteine hydrolase penJ acts as an epoxide hydrolase that enhances the rate of the 5-exo-tet cyclization step, increasing the yield of yaequinolone C. PenF catalyzes the cationic rearrangement of the epoxide formed by penE (before ring opening to produce yaequinolone C) into yaequinolone D. Finally, the short-chain dehydrogenase/reductase (SDR)-like reductase penD, catalyzes both the dehydration of yaequinolone D and the reduction of the resulting oxonium to yield penigequinolone. This Penicillium thymicola protein is Cyclopenase penL.